Here is a 508-residue protein sequence, read N- to C-terminus: Light-independent protochlorophyllide reductase subunit B (508 aa).

Asp36 provides a ligand contact to [4Fe-4S] cluster. Asp294 serves as the catalytic Proton donor. 429 to 430 (GM) contacts substrate.

Belongs to the ChlB/BchB/BchZ family. Protochlorophyllide reductase is composed of three subunits; ChlL, ChlN and ChlB. Forms a heterotetramer of two ChlB and two ChlN subunits. [4Fe-4S] cluster serves as cofactor.

The protein localises to the plastid. It localises to the chloroplast. It carries out the reaction chlorophyllide a + oxidized 2[4Fe-4S]-[ferredoxin] + 2 ADP + 2 phosphate = protochlorophyllide a + reduced 2[4Fe-4S]-[ferredoxin] + 2 ATP + 2 H2O. It participates in porphyrin-containing compound metabolism; chlorophyll biosynthesis (light-independent). Component of the dark-operative protochlorophyllide reductase (DPOR) that uses Mg-ATP and reduced ferredoxin to reduce ring D of protochlorophyllide (Pchlide) to form chlorophyllide a (Chlide). This reaction is light-independent. The NB-protein (ChlN-ChlB) is the catalytic component of the complex. The polypeptide is Light-independent protochlorophyllide reductase subunit B (Pyropia yezoensis (Susabi-nori)).